We begin with the raw amino-acid sequence, 325 residues long: Phosphate import ATP-binding protein PstB (325 aa).

Residues 79–320 (IDNYNLWYSN…PNNEKTKDYI (242 aa)) form the ABC transporter domain. Residue 111–118 (GPSGCGKS) participates in ATP binding.

The protein belongs to the ABC transporter superfamily. Phosphate importer (TC 3.A.1.7) family. The complex is composed of two ATP-binding proteins (PstB), two transmembrane proteins (PstC and PstA) and a solute-binding protein (PstS).

The protein localises to the cell membrane. It carries out the reaction phosphate(out) + ATP + H2O = ADP + 2 phosphate(in) + H(+). Functionally, part of the ABC transporter complex PstSACB involved in phosphate import. Responsible for energy coupling to the transport system. The sequence is that of Phosphate import ATP-binding protein PstB from Mycoplasmoides gallisepticum (strain R(low / passage 15 / clone 2)) (Mycoplasma gallisepticum).